The primary structure comprises 427 residues: 5-hydroxybenzimidazole synthase BzaB (427 aa).

Belongs to the ThiC family. 5-hydroxybenzimidazole synthase subfamily. [4Fe-4S] cluster serves as cofactor.

The enzyme catalyses 5-amino-1-(5-phospho-beta-D-ribosyl)imidazole + AH2 + S-adenosyl-L-methionine = 5-hydroxybenzimidazole + 5'-deoxyadenosine + formate + L-methionine + A + NH4(+) + phosphate + 2 H(+). Its pathway is cofactor biosynthesis; adenosylcobalamin biosynthesis. Its function is as follows. Together with BzaA, catalyzes the conversion of aminoimidazole ribotide (AIR) to 5-hydroxybenzimidazole (5-HBI) in a radical S-adenosyl-L-methionine (SAM)-dependent reaction. Is thus involved in the anaerobic biosynthesis of dimethylbenzimidazole (DMB), the lower axial ligand of vitamin B12 (cobalamin). Requires BzaA for catalytic activity, as BzaB alone displays no activity. This Eubacterium limosum protein is 5-hydroxybenzimidazole synthase BzaB.